The chain runs to 173 residues: 3-hydroxydecanoyl-[acyl-carrier-protein] dehydratase (173 aa).

Histidine 71 is an active-site residue.

The protein belongs to the thioester dehydratase family. FabA subfamily. As to quaternary structure, homodimer.

Its subcellular location is the cytoplasm. It carries out the reaction a (3R)-hydroxyacyl-[ACP] = a (2E)-enoyl-[ACP] + H2O. The catalysed reaction is (3R)-hydroxydecanoyl-[ACP] = (2E)-decenoyl-[ACP] + H2O. The enzyme catalyses (2E)-decenoyl-[ACP] = (3Z)-decenoyl-[ACP]. It participates in lipid metabolism; fatty acid biosynthesis. In terms of biological role, necessary for the introduction of cis unsaturation into fatty acids. Catalyzes the dehydration of (3R)-3-hydroxydecanoyl-ACP to E-(2)-decenoyl-ACP and then its isomerization to Z-(3)-decenoyl-ACP. Can catalyze the dehydratase reaction for beta-hydroxyacyl-ACPs with saturated chain lengths up to 16:0, being most active on intermediate chain length. The polypeptide is 3-hydroxydecanoyl-[acyl-carrier-protein] dehydratase (Bradyrhizobium diazoefficiens (strain JCM 10833 / BCRC 13528 / IAM 13628 / NBRC 14792 / USDA 110)).